The chain runs to 269 residues: Eukaryotic translation initiation factor 3 subunit G-2 (269 aa).

The 79-residue stretch at 189 to 267 folds into the RRM domain; that stretch reads SAVRISNLSE…LILCVEWSKP (79 aa).

It belongs to the eIF-3 subunit G family. As to quaternary structure, component of the eukaryotic translation initiation factor 3 (eIF-3) complex. The eIF-3 complex interacts with pix.

The protein localises to the cytoplasm. In terms of biological role, RNA-binding component of the eukaryotic translation initiation factor 3 (eIF-3) complex, which is involved in protein synthesis of a specialized repertoire of mRNAs and, together with other initiation factors, stimulates binding of mRNA and methionyl-tRNAi to the 40S ribosome. The eIF-3 complex specifically targets and initiates translation of a subset of mRNAs involved in cell proliferation. This subunit can bind 18S rRNA. The sequence is that of Eukaryotic translation initiation factor 3 subunit G-2 from Drosophila ananassae (Fruit fly).